The sequence spans 351 residues: Penicillolysin (351 aa).

An N-terminal signal peptide occupies residues 1–19 (MRFTTLSTAFLALAQNVYA). A propeptide spanning residues 20 to 174 (FPIESDLSAL…TKALKPLDRR (155 aa)) is cleaved from the precursor. Residues asparagine 52 and asparagine 181 are each glycosylated (N-linked (GlcNAc...) asparagine). Histidine 302 contributes to the Zn(2+) binding site. Residue glutamate 303 is part of the active site. Residues histidine 306 and aspartate 317 each coordinate Zn(2+).

This sequence belongs to the peptidase M35 family. Zn(2+) is required as a cofactor.

It catalyses the reaction Preferential cleavage of bonds with hydrophobic residues in P1'. Also 3-Asn-|-Gln-4 and 8-Gly-|-Ser-9 bonds in insulin B chain.. In Penicillium citrinum, this protein is Penicillolysin (plnC).